The following is a 377-amino-acid chain: Succinyl-diaminopimelate desuccinylase (377 aa).

His68 is a Zn(2+) binding site. Asp70 is an active-site residue. Asp101 contributes to the Zn(2+) binding site. Residue Glu135 is the Proton acceptor of the active site. Zn(2+)-binding residues include Glu136, Glu164, and His350.

It belongs to the peptidase M20A family. DapE subfamily. As to quaternary structure, homodimer. It depends on Zn(2+) as a cofactor. The cofactor is Co(2+).

The catalysed reaction is N-succinyl-(2S,6S)-2,6-diaminopimelate + H2O = (2S,6S)-2,6-diaminopimelate + succinate. It participates in amino-acid biosynthesis; L-lysine biosynthesis via DAP pathway; LL-2,6-diaminopimelate from (S)-tetrahydrodipicolinate (succinylase route): step 3/3. Catalyzes the hydrolysis of N-succinyl-L,L-diaminopimelic acid (SDAP), forming succinate and LL-2,6-diaminopimelate (DAP), an intermediate involved in the bacterial biosynthesis of lysine and meso-diaminopimelic acid, an essential component of bacterial cell walls. The protein is Succinyl-diaminopimelate desuccinylase of Aliivibrio fischeri (strain MJ11) (Vibrio fischeri).